A 684-amino-acid polypeptide reads, in one-letter code: Phenoloxidase 1 (684 aa).

The propeptide at 1-50 (MSDKNKLLLLFDRPLETVIVPRGPDQEAFDVPVDLLSDRYKAIGVQVSNR) is removed by PPAF1. A glycan (N-linked (GlcNAc...) asparagine) is linked at Asn-80. 3 residues coordinate Cu cation: His-208, His-212, and His-237. The active-site Proton acceptor is the Glu-349. N-linked (GlcNAc...) asparagine glycosylation is found at Asn-352 and Asn-356. Residues His-364, His-368, and His-404 each contribute to the Cu cation site. 3 N-linked (GlcNAc...) asparagine glycosylation sites follow: Asn-486, Asn-491, and Asn-545. 2 cysteine pairs are disulfide-bonded: Cys-579–Cys-621 and Cys-581–Cys-628.

This sequence belongs to the tyrosinase family. As to quaternary structure, dimer. Might form a homodimer or a heterodimer with PPO1. Might interact with PPAF2 (via CLIP domain); the interaction might be required for PPO1 activity. The cofactor is Cu(2+). Post-translationally, propeptide cleaved by PPAF1. Hemocytes.

It localises to the secreted. Functionally, this is a copper-containing oxidase that functions in the formation of pigments such as melanins and other polyphenolic compounds. Catalyzes the oxidation of o-diphenols (N-acetyldopamine, 4-methylcatechol and dopamine). Cannot oxidize monophenols and p-phenols (L-tyrosine, tyramine, gentisic acid and hydroquinone). Binds to the surface of hemocytes and is involved in hemocyte melanization. Activation of the enzyme in response to bacterial lipopolysaccharides (LPS) suggests it may play a role in innate immunity. This Holotrichia diomphalia (Korean black chafer) protein is Phenoloxidase 1.